A 322-amino-acid polypeptide reads, in one-letter code: Probable L-asparaginase (322 aa).

The 315-residue stretch at 6-320 (PRLALIHTGG…EDIRRVFTQG (315 aa)) folds into the Asparaginase/glutaminase domain. Residues 13-37 (TGGTIASRPSPDGRGLTPQTPPALP) form a disordered region. Catalysis depends on Thr16, which acts as the O-isoaspartyl threonine intermediate. Substrate contacts are provided by residues Ser54 and 85–86 (TD).

The protein belongs to the asparaginase 1 family.

The protein resides in the cytoplasm. The enzyme catalyses L-asparagine + H2O = L-aspartate + NH4(+). The protein is Probable L-asparaginase (ansA) of Deinococcus radiodurans (strain ATCC 13939 / DSM 20539 / JCM 16871 / CCUG 27074 / LMG 4051 / NBRC 15346 / NCIMB 9279 / VKM B-1422 / R1).